The following is an 80-amino-acid chain: Protein FAM229B (80 aa).

The tract at residues 1–44 (MPFRFGTQPRRFPVEGGDSSIGLEPGLSSSAACNGKEMSPTRQL) is disordered.

The protein belongs to the FAM229 family.

The polypeptide is Protein FAM229B (FAM229B) (Macaca fascicularis (Crab-eating macaque)).